Consider the following 109-residue polypeptide: MQQLEFYPIAFLILAVMLEIVANILLKMSDGFRRKWLGILSLLSVLGAFSALAQAVKGIELSVAYAMWGGFGIAATVAAGWILFNQRLNYKGWIGLILLLAGMVMIKLS.

The next 4 helical transmembrane spans lie at 6–26 (FYPIAFLILAVMLEIVANILL), 36–56 (WLGILSLLSVLGAFSALAQAV), 64–84 (AYAMWGGFGIAATVAAGWILF), and 88–108 (LNYKGWIGLILLLAGMVMIKL).

The protein belongs to the drug/metabolite transporter (DMT) superfamily. Small multidrug resistance (SMR) (TC 2.A.7.1) family. MdtI subfamily. As to quaternary structure, forms a complex with MdtJ.

It is found in the cell inner membrane. Catalyzes the excretion of spermidine. The protein is Spermidine export protein MdtI of Yersinia pseudotuberculosis serotype I (strain IP32953).